The sequence spans 284 residues: Shikimate dehydrogenase (NADP(+)) (284 aa).

Residues 20–22 and S67 each bind shikimate; that span reads SIS. The active-site Proton acceptor is the K71. D83 serves as a coordination point for NADP(+). Residues N92 and D107 each contribute to the shikimate site. NADP(+) contacts are provided by residues 129–133 and I227; that span reads GAGGA. Residue Y229 coordinates shikimate. An NADP(+)-binding site is contributed by G250.

This sequence belongs to the shikimate dehydrogenase family. Homodimer.

The catalysed reaction is shikimate + NADP(+) = 3-dehydroshikimate + NADPH + H(+). It participates in metabolic intermediate biosynthesis; chorismate biosynthesis; chorismate from D-erythrose 4-phosphate and phosphoenolpyruvate: step 4/7. Functionally, involved in the biosynthesis of the chorismate, which leads to the biosynthesis of aromatic amino acids. Catalyzes the reversible NADPH linked reduction of 3-dehydroshikimate (DHSA) to yield shikimate (SA). The polypeptide is Shikimate dehydrogenase (NADP(+)) (Streptococcus pneumoniae (strain ATCC 700669 / Spain 23F-1)).